We begin with the raw amino-acid sequence, 150 residues long: Viral late gene transcription factor 2 (150 aa).

The protein belongs to the orthopoxvirus VLTF-2/OPG126 family. Interacts with itself. Interacts with the late transcription factors VLTF-1/OPG093.

Its function is as follows. Acts with RNA polymerase to initiate transcription from late gene promoters. This Vaccinia virus (strain Western Reserve) (VACV) protein is Viral late gene transcription factor 2 (OPG126).